We begin with the raw amino-acid sequence, 165 residues long: Shikimate kinase (165 aa).

An ATP-binding site is contributed by 12–17 (GCGKST). Serine 16 is a binding site for Mg(2+). Substrate-binding residues include aspartate 34, arginine 57, and glycine 79. Position 116 (arginine 116) interacts with ATP. Arginine 133 is a substrate binding site.

It belongs to the shikimate kinase family. Monomer. The cofactor is Mg(2+).

The protein resides in the cytoplasm. It carries out the reaction shikimate + ATP = 3-phosphoshikimate + ADP + H(+). Its pathway is metabolic intermediate biosynthesis; chorismate biosynthesis; chorismate from D-erythrose 4-phosphate and phosphoenolpyruvate: step 5/7. In terms of biological role, catalyzes the specific phosphorylation of the 3-hydroxyl group of shikimic acid using ATP as a cosubstrate. This Clostridium botulinum (strain Alaska E43 / Type E3) protein is Shikimate kinase.